Here is a 125-residue protein sequence, read N- to C-terminus: Small ribosomal subunit protein uS12 (125 aa).

Asp-89 is subject to 3-methylthioaspartic acid.

It belongs to the universal ribosomal protein uS12 family. As to quaternary structure, part of the 30S ribosomal subunit. Contacts proteins S8 and S17. May interact with IF1 in the 30S initiation complex.

With S4 and S5 plays an important role in translational accuracy. In terms of biological role, interacts with and stabilizes bases of the 16S rRNA that are involved in tRNA selection in the A site and with the mRNA backbone. Located at the interface of the 30S and 50S subunits, it traverses the body of the 30S subunit contacting proteins on the other side and probably holding the rRNA structure together. The combined cluster of proteins S8, S12 and S17 appears to hold together the shoulder and platform of the 30S subunit. The sequence is that of Small ribosomal subunit protein uS12 from Cupriavidus metallidurans (strain ATCC 43123 / DSM 2839 / NBRC 102507 / CH34) (Ralstonia metallidurans).